A 940-amino-acid polypeptide reads, in one-letter code: Translation initiation factor IF-2 (940 aa).

Disordered stretches follow at residues 48-264 (ESFG…VESK) and 278-351 (QVAE…TERK). 5 stretches are compositionally biased toward basic and acidic residues: residues 65–95 (SKPEKVDETPKVETAKVEKAKETQPVVKEEV), 112–125 (FKAEREARAKEQAA), 155–206 (NNER…REAA), 232–258 (RTSEERFRQAQEAKKQPKKPKEIKFEE), and 292–301 (ARPDKKRDFN). Positions 314–332 (NRNSQNQVRNQRTSNWNNN) are enriched in low complexity. One can recognise a tr-type G domain in the interval 442-609 (ERPPVVTIMG…TVLLVAEIQE (168 aa)). The G1 stretch occupies residues 451–458 (GHVDHGKT). Residue 451 to 458 (GHVDHGKT) participates in GTP binding. The interval 476–480 (GITQH) is G2. The interval 497–500 (DTPG) is G3. GTP-binding positions include 497 to 501 (DTPGH) and 551 to 554 (NKID). Residues 551–554 (NKID) are G4. A G5 region spans residues 587-589 (SAK).

The protein belongs to the TRAFAC class translation factor GTPase superfamily. Classic translation factor GTPase family. IF-2 subfamily.

The protein resides in the cytoplasm. In terms of biological role, one of the essential components for the initiation of protein synthesis. Protects formylmethionyl-tRNA from spontaneous hydrolysis and promotes its binding to the 30S ribosomal subunits. Also involved in the hydrolysis of GTP during the formation of the 70S ribosomal complex. The chain is Translation initiation factor IF-2 from Streptococcus suis (strain 98HAH33).